The sequence spans 348 residues: NADH-ubiquinone oxidoreductase chain 2 (348 aa).

The next 10 membrane-spanning stretches (helical) occupy residues 3–23, 25–45, 59–79, 93–115, 149–169, 178–198, 201–221, 239–259, 276–296, and 326–346; these read PIIISMIGFTIILGTTIVLMS, HWFMIWIGFEMNMLAIIPVLM, YFLTQTTASMLMLLSVMINLI, TASTIMTLSLAMKLGLSPFHFWV, LNMTMLLTMSILSVVMGGWGG, ILAFSSIAHMGWMTAIIMFNP, TLLNLLLYILMTTTIFMILIF, IMTVIMLTILMSLGGLPPLSG, IALALIMAMSALLNLYFYMRL, and LPTLTIMSTLLLPLTPMMMML.

Belongs to the complex I subunit 2 family. As to quaternary structure, core subunit of respiratory chain NADH dehydrogenase (Complex I) which is composed of 45 different subunits. Interacts with TMEM242.

The protein resides in the mitochondrion inner membrane. It catalyses the reaction a ubiquinone + NADH + 5 H(+)(in) = a ubiquinol + NAD(+) + 4 H(+)(out). Its function is as follows. Core subunit of the mitochondrial membrane respiratory chain NADH dehydrogenase (Complex I) which catalyzes electron transfer from NADH through the respiratory chain, using ubiquinone as an electron acceptor. Essential for the catalytic activity and assembly of complex I. In Thyroptera tricolor (Spix's disk-winged bat), this protein is NADH-ubiquinone oxidoreductase chain 2.